The following is a 355-amino-acid chain: tRNA uridine(34) hydroxylase (355 aa).

The 95-residue stretch at 146 to 240 (KDPDALFVDM…YVRTAKKKDL (95 aa)) folds into the Rhodanese domain. The active-site Cysteine persulfide intermediate is Cys200.

Belongs to the TrhO family.

It carries out the reaction uridine(34) in tRNA + AH2 + O2 = 5-hydroxyuridine(34) in tRNA + A + H2O. Catalyzes oxygen-dependent 5-hydroxyuridine (ho5U) modification at position 34 in tRNAs. In Hamiltonella defensa subsp. Acyrthosiphon pisum (strain 5AT), this protein is tRNA uridine(34) hydroxylase.